The sequence spans 93 residues: Small ribosomal subunit protein uS15 (93 aa).

It belongs to the universal ribosomal protein uS15 family. As to quaternary structure, part of the 30S ribosomal subunit. Forms a bridge to the 50S subunit in the 70S ribosome, contacting the 23S rRNA.

One of the primary rRNA binding proteins, it binds directly to 16S rRNA where it helps nucleate assembly of the platform of the 30S subunit by binding and bridging several RNA helices of the 16S rRNA. Functionally, forms an intersubunit bridge (bridge B4) with the 23S rRNA of the 50S subunit in the ribosome. The sequence is that of Small ribosomal subunit protein uS15 from Anaplasma marginale (strain Florida).